Reading from the N-terminus, the 269-residue chain is Cytochrome c oxidase subunit 3 (269 aa).

7 helical membrane passes run 21–41 (PWPI…GLTM), 45–65 (IVGN…MTMW), 90–110 (GFLL…WAYF), 127–147 (VGIT…ILLA), 167–187 (ALNG…CQYI), 204–224 (VFFA…IMLA), and 247–267 (ILYL…MYWW).

It belongs to the cytochrome c oxidase subunit 3 family. Component of the cytochrome c oxidase (complex IV, CIV), a multisubunit enzyme composed of a catalytic core of 3 subunits and several supernumerary subunits. The complex exists as a monomer or a dimer and forms supercomplexes (SCs) in the inner mitochondrial membrane with ubiquinol-cytochrome c oxidoreductase (cytochrome b-c1 complex, complex III, CIII).

The protein localises to the mitochondrion inner membrane. It catalyses the reaction 4 Fe(II)-[cytochrome c] + O2 + 8 H(+)(in) = 4 Fe(III)-[cytochrome c] + 2 H2O + 4 H(+)(out). Component of the cytochrome c oxidase, the last enzyme in the mitochondrial electron transport chain which drives oxidative phosphorylation. The respiratory chain contains 3 multisubunit complexes succinate dehydrogenase (complex II, CII), ubiquinol-cytochrome c oxidoreductase (cytochrome b-c1 complex, complex III, CIII) and cytochrome c oxidase (complex IV, CIV), that cooperate to transfer electrons derived from NADH and succinate to molecular oxygen, creating an electrochemical gradient over the inner membrane that drives transmembrane transport and the ATP synthase. Cytochrome c oxidase is the component of the respiratory chain that catalyzes the reduction of oxygen to water. Electrons originating from reduced cytochrome c in the intermembrane space (IMS) are transferred via the dinuclear copper A center (CU(A)) of subunit 2 and heme A of subunit 1 to the active site in subunit 1, a binuclear center (BNC) formed by heme A3 and copper B (CU(B)). The BNC reduces molecular oxygen to 2 water molecules using 4 electrons from cytochrome c in the IMS and 4 protons from the mitochondrial matrix. This Wickerhamomyces canadensis (Yeast) protein is Cytochrome c oxidase subunit 3 (COX3).